A 315-amino-acid chain; its full sequence is MEGPPPSKRPCGLPPGVRLVVPAAAASASNAATAAAAAAPAGAGAGASKPARPPAAARPAKGTPAASAATTATGADASAPAPDPGAPTWDAFAAEFDVAPSWRALLEPEIAKPYARLLLAEYRGRCLTEEVLPAREDVFAWTRLTAPEDVKVVIIGQDPYHGPGQAHGLAFSVRRGVPIPPSLANIFAAVRATYPTLPAPAHGCLEAWARRGVLLLNTTLTVRRGVPGSHAPLGWARLVRAVVQRLCETRPKLVFMLWGAHAQKACAPDPRRHKVLTFSHPSPLARTPFRTCPHFGEANAYLVQTGRAPVDWSVD.

Over residues 35-80 the composition is skewed to low complexity; it reads AAAAAPAGAGAGASKPARPPAAARPAKGTPAASAATTATGADASAP. Residues 35-88 form a disordered region; it reads AAAAAPAGAGAGASKPARPPAAARPAKGTPAASAATTATGADASAPAPDPGAPT. Aspartate 158 acts as the Proton acceptor in catalysis.

Belongs to the uracil-DNA glycosylase (UDG) superfamily. UNG family.

It localises to the host nucleus. It catalyses the reaction Hydrolyzes single-stranded DNA or mismatched double-stranded DNA and polynucleotides, releasing free uracil.. Excises uracil residues from the DNA which can arise as a result of misincorporation of dUMP residues by DNA polymerase or deamination of cytosines. Therefore may reduce deleterious uracil incorporation into the viral genome, particularly in terminally differentiated cells which lack DNA repair enzymes. This chain is Uracil-DNA glycosylase (UL2), found in Suid herpesvirus 1 (strain Indiana-Funkhauser / Becker) (SuHV-1).